Consider the following 411-residue polypeptide: MRMPAGFLINAMKKQNLVILGSTGSIGKSTLSVIEHNPEKYHAFALVGGRNVDLMVEQCVKFQPEFAALDDENAAKQLAEKLKSAGKKTKVLAGQKAICELAAHPEADQVMAAIVGAAGLLPTLSAVQASKTVLLANKETLVTCGQIFIDEVKRTKARLLPVDSEHNAIFQSLPPEAQQQIGFCPLKELGINKIVLTGSGGPFRYTDLTEFDNITPEQAVAHPNWSMGKKISVDSATMMNKGLEYIEARWLFNAGAEEMEVIIHPQSIIHSMVRYIDGSVIAQMGNPDMRTPIAETMAYPGRIVSGVTPLDFYQLSGLTFLEPDYERYPCLKLAIEAFAAGQYATTAMNAANEIAVEAFLNRMIKFTDIARVNAKVVELIQPQQINCIDDVLAVDKQSRLVAKEVIVSLKA.

Positions 23, 24, 25, 26, 49, 50, 51, and 137 each coordinate NADPH. 1-deoxy-D-xylulose 5-phosphate is bound at residue Lys-138. Position 139 (Glu-139) interacts with NADPH. Residue Asp-163 coordinates Mn(2+). Residues Ser-164, Glu-165, Ser-199, and His-222 each contribute to the 1-deoxy-D-xylulose 5-phosphate site. Glu-165 contacts Mn(2+). Gly-228 is a binding site for NADPH. The 1-deoxy-D-xylulose 5-phosphate site is built by Ser-235, Asn-240, Lys-241, and Glu-244. Glu-244 contacts Mn(2+).

This sequence belongs to the DXR family. Mg(2+) is required as a cofactor. It depends on Mn(2+) as a cofactor.

It catalyses the reaction 2-C-methyl-D-erythritol 4-phosphate + NADP(+) = 1-deoxy-D-xylulose 5-phosphate + NADPH + H(+). It functions in the pathway isoprenoid biosynthesis; isopentenyl diphosphate biosynthesis via DXP pathway; isopentenyl diphosphate from 1-deoxy-D-xylulose 5-phosphate: step 1/6. Catalyzes the NADPH-dependent rearrangement and reduction of 1-deoxy-D-xylulose-5-phosphate (DXP) to 2-C-methyl-D-erythritol 4-phosphate (MEP). The protein is 1-deoxy-D-xylulose 5-phosphate reductoisomerase of Mannheimia succiniciproducens (strain KCTC 0769BP / MBEL55E).